The primary structure comprises 274 residues: MKKTQTWIITCIYLQLLLFNPLVKTKGICENRVTDDVKDVTKLVANLPKDYKITLKYVPGMDVLPSHCWISEMVQHLSVSLTDLLEKFSNISEGLSNYSIIDKLVKIVDDLVECMEEHSSENVKKSYKSQESRLFTPEEFFRIFNRSIDAFKDLEMVVSKTSECVVSSTLSPEKDSRVSVTKPFMLPPVAASSLRNDSSSSNRKASNFTGDSNLQWAAMALPAFFSLVIGFAFGALYWKKKQPNLTRAVENIQINEEDNEISMLQEKEREFQEV.

A signal peptide spans 1 to 25; that stretch reads MKKTQTWIITCIYLQLLLFNPLVKT. The Extracellular segment spans residues 26–215; it reads KGICENRVTD…SNFTGDSNLQ (190 aa). Intrachain disulfides connect C29/C114 and C68/C164. 5 N-linked (GlcNAc...) asparagine glycosylation sites follow: N90, N97, N145, N196, and N207. A helical membrane pass occupies residues 216–238; that stretch reads WAAMALPAFFSLVIGFAFGALYW. The Cytoplasmic portion of the chain corresponds to 239–274; it reads KKKQPNLTRAVENIQINEEDNEISMLQEKEREFQEV.

The protein belongs to the SCF family. In terms of assembly, homodimer, non-covalently linked. In terms of processing, a soluble form is produced by proteolytic processing of the extracellular domain.

Its subcellular location is the cytoplasm. The protein resides in the cytoskeleton. It is found in the cell membrane. It localises to the cell projection. The protein localises to the lamellipodium. Its subcellular location is the filopodium. The protein resides in the secreted. Its function is as follows. Stimulates the proliferation of mast cells. Able to augment the proliferation of both myeloid and lymphoid hematopoietic progenitors in bone marrow culture. Also mediates cell-cell adhesion. Acts synergistically with other cytokines, probably interleukins. This Equus caballus (Horse) protein is Kit ligand (KITLG).